The sequence spans 231 residues: Uracil-DNA glycosylase (231 aa).

Catalysis depends on Asp74, which acts as the Proton acceptor.

This sequence belongs to the uracil-DNA glycosylase (UDG) superfamily. UNG family.

Its subcellular location is the cytoplasm. The enzyme catalyses Hydrolyzes single-stranded DNA or mismatched double-stranded DNA and polynucleotides, releasing free uracil.. Functionally, excises uracil residues from the DNA which can arise as a result of misincorporation of dUMP residues by DNA polymerase or due to deamination of cytosine. This Campylobacter jejuni subsp. jejuni serotype O:23/36 (strain 81-176) protein is Uracil-DNA glycosylase.